A 997-amino-acid chain; its full sequence is Autophagy-related protein 9 (997 aa).

The Cytoplasmic segment spans residues 1 to 318; it reads MERDEYQLPN…DVYNYYLGNG (318 aa). S19 carries the post-translational modification Phosphoserine; by ATG1. The segment covering 29–39 has biased composition (polar residues); that stretch reads VNPSLNSQEMS. The segment at 29-88 is disordered; that stretch reads VNPSLNSQEMSNFPLPDIERGSSLLHSTNDSREDVDENDLRVPESDQGTSTEEEDEVDEE. Acidic residues predominate over residues 79–88; that stretch reads TEEEDEVDEE. Residues K113 and K121 each participate in a glycyl lysine isopeptide (Lys-Gly) (interchain with G-Cter in ubiquitin) cross-link. Residue S122 is modified to Phosphoserine. Disordered stretches follow at residues 128–159 and 213–235; these read VEGS…DGFD and IHHD…QKHG. Residue K138 forms a Glycyl lysine isopeptide (Lys-Gly) (interchain with G-Cter in ubiquitin) linkage. A phosphoserine mark is found at S143 and S144. A compositionally biased stretch (acidic residues) spans 144 to 159; that stretch reads SEEEEDNEFINNDGFD. Residues 221-233 are compositionally biased toward polar residues; that stretch reads ANNGPRNINGNQK. The helical transmembrane segment at 319 to 339 threads the bilayer; it reads FYCIILEKILNICTLLFVVFV. The Lumenal portion of the chain corresponds to 340–376; the sequence is STYMGHCVDYSKLPTSHRVSDIIIDKCYSNSITGFTK. Residues 377 to 397 form a helical membrane-spanning segment; the sequence is FFLWMFYFFVILKIVQLYFDV. Over 398–538 the chain is Cytoplasmic; that stretch reads QKLSELQNFY…EELQKRFMLA (141 aa). An intramembrane segment occupies 539–559; the sequence is GFLNIILAPFLVTYFVLLYFF. The Cytoplasmic portion of the chain corresponds to 560-620; the sequence is RYFNEYKTSP…DQFPKEKTNL (61 aa). A helical transmembrane segment spans residues 621–641; sequence FLKFVSFICGSFVAILAFLTV. Over 642–656 the chain is Lumenal; it reads FDPENFLNFEITSDR. Phosphoserine; by ATG1 is present on S657. Residues 657-677 form a helical membrane-spanning segment; the sequence is SVIFYITILGAIWSVSRNTIT. At 678–723 the chain is on the cytoplasmic side; it reads QEYHVFDPEETLKELYEYTHYLPKEWEGRYHKEEIKLEFCKLYNLR. Residue K701 forms a Glycyl lysine isopeptide (Lys-Gly) (interchain with G-Cter in ubiquitin) linkage. Residues 724–744 lie within the membrane without spanning it; sequence IVILLRELTSLMITPFVLWFS. The Cytoplasmic portion of the chain corresponds to 745–997; it reads LPSSAGRIVD…EYYKKSDVGR (253 aa). A phosphoserine mark is found at S787 and S792. Position 794 is a phosphothreonine (T794). S802 is subject to Phosphoserine; by ATG1. T804 bears the Phosphothreonine; by ATG1 mark. A phosphoserine; by ATG1 mark is found at S831 and S842. S864 carries the phosphoserine modification. 2 positions are modified to phosphoserine; by ATG1: S948 and S969.

Belongs to the ATG9 family. Homotrimer; forms a homotrimer with a central pore that forms a path between the two membrane leaflets. Interacts with ATG23 and ATG27 to form a cycling complex for trafficking to the PAS. Interacts (via N-terminus) with ATG11, required for recruitment of ATG9 to the PAS for the Cvt pathway during nutrient-rich conditions. Interacts (via N-terminus) with ATG17; required for recruitment to the PAS during autophagy and starved conditions. Interacts with ATG2 and ATG18; required for the retrieval of ATG9 from the PAS to the cytoplasmic pool. Interacts with ATG41. Interacts with the conserved oligomeric Golgi (COG) complex subunits COG3 and COG4. Interacts with TRS85. Phosphorylated by ATG1; phosphorylation is required for autophagy and cytoplasm to vacuole transport (Cvt) vesicle formation. Phosphorylation by ATG1 regulates ATG18 interaction and preautophagosome elongation. Phosphorylation at Ser-122 is required for selective autophagy by regulating anterograde trafficking and interaction with ATG23 and ATG27. Phosphorylation at Ser-122 prevents ubiquitination by the SCF(MET30) complex. Post-translationally, ubiquitinated by the SCF(MET30) complex in normal conditions, leading to its degradation by the proteasome, thereby preventing inappropriate induction of autophagy. Ubiquitination by the SCF(MET30) complex is prevented by phosphorylation at Ser-122.

The protein localises to the preautophagosomal structure membrane. Its subcellular location is the cytoplasmic vesicle membrane. It localises to the golgi apparatus membrane. The protein resides in the endoplasmic reticulum membrane. It is found in the mitochondrion membrane. It catalyses the reaction a 1,2-diacyl-sn-glycero-3-phosphocholine(in) = a 1,2-diacyl-sn-glycero-3-phosphocholine(out). The catalysed reaction is a 1,2-diacyl-sn-glycero-3-phospho-L-serine(in) = a 1,2-diacyl-sn-glycero-3-phospho-L-serine(out). It carries out the reaction a 1,2-diacyl-sn-glycero-3-phosphoethanolamine(in) = a 1,2-diacyl-sn-glycero-3-phosphoethanolamine(out). The enzyme catalyses a 1,2-diacyl-sn-glycero-3-phospho-(1D-myo-inositol-3-phosphate)(in) = a 1,2-diacyl-sn-glycero-3-phospho-(1D-myo-inositol-3-phosphate)(out). Phospholipid scramblase involved in autophagy and cytoplasm to vacuole transport (Cvt) vesicle formation. Cycles between the preautophagosomal structure/phagophore assembly site (PAS) and the cytoplasmic vesicle pool and supplies membrane for the growing autophagosome. Lipid scramblase activity plays a key role in preautophagosomal structure/phagophore assembly by distributing the phospholipids that arrive through ATG2 from the cytoplasmic to the luminal leaflet of the bilayer, thereby driving autophagosomal membrane expansion. Required for mitophagy. Also involved in endoplasmic reticulum-specific autophagic process and is essential for the survival of cells subjected to severe ER stress. Recruits vesicle-tethering proteins TRS85 and YPT1 to the autophagosome formation site. Also recruits ATG23 and ATG8 to the PAS. This is Autophagy-related protein 9 from Saccharomyces cerevisiae (strain ATCC 204508 / S288c) (Baker's yeast).